We begin with the raw amino-acid sequence, 985 residues long: Vacuolar membrane protease (985 aa).

Residues 1 to 20 lie on the Cytoplasmic side of the membrane; the sequence is MASSRAQRFNPIAFTPWPVT. The chain crosses the membrane as a helical span at residues 21–41; that stretch reads CITTIVYLALLIPILVINLVV. Residues 42–388 lie on the Vacuolar side of the membrane; that stretch reads PSAPETNPKG…MFGTAFAVFR (347 aa). 3 N-linked (GlcNAc...) asparagine glycosylation sites follow: Asn-53, Asn-116, and Asn-119. Positions 175 and 187 each coordinate Zn(2+). Glu-221 serves as the catalytic Proton acceptor. A Zn(2+)-binding site is contributed by Glu-222. N-linked (GlcNAc...) asparagine glycosylation is present at Asn-238. Zn(2+) contacts are provided by Glu-247 and His-320. A helical transmembrane segment spans residues 389–409; that stretch reads LHTLFAISVALLVIAPLVIFV. At 410–440 the chain is on the cytoplasmic side; sequence TNRMYLFSMSKSLEGTGDQVSLRGLRGFSRT. The helical transmembrane segment at 441–461 threads the bilayer; sequence PIILVTATTIPICLAYLLEKV. Residues 462-470 are Vacuolar-facing; the sequence is NPYIVHSSQ. A helical membrane pass occupies residues 471 to 491; the sequence is FSVWSMMFSAWIFLAWFLACA. Residues 492–502 are Cytoplasmic-facing; that stretch reads ADFFRPSALHR. The chain crosses the membrane as a helical span at residues 503–523; it reads AYSYTWIFIATWIMLVINTVY. Topologically, residues 524 to 527 are vacuolar; that stretch reads ANQK. Residues 528–548 traverse the membrane as a helical segment; it reads GIAAGYFLLFYFAGAFLATWI. Residues 549–666 are Cytoplasmic-facing; sequence SYLELFALPR…TLPRWTWVLQ (118 aa). Residues 563–612 are disordered; sequence ARQTTGRRPSSLSSRLLTSSADELRSNASPSTAEFPGAAGEDTDPTESTS. A compositionally biased stretch (low complexity) spans 566–582; the sequence is TTGRRPSSLSSRLLTSS. Residues 667 to 687 traverse the membrane as a helical segment; that stretch reads LLLLAPIVLILVGQLALFLTA. At 688-700 the chain is on the vacuolar side; it reads SMCQVGSDGVSTF. A helical membrane pass occupies residues 701 to 721; the sequence is VVYLACAVFTTLLCIPLFPLI. Residues 722-727 lie on the Cytoplasmic side of the membrane; it reads HRFTYH. A helical transmembrane segment spans residues 728 to 748; the sequence is IPTFLFLVFIGTLIYNLVAFP. The Vacuolar portion of the chain corresponds to 749 to 985; that stretch reads FSPANRLKTF…VEASHSFTIQ (237 aa). 3 N-linked (GlcNAc...) asparagine glycosylation sites follow: Asn-767, Asn-795, and Asn-839.

Belongs to the peptidase M28 family. It depends on Zn(2+) as a cofactor.

The protein localises to the vacuole membrane. May be involved in vacuolar sorting and osmoregulation. This is Vacuolar membrane protease from Ajellomyces capsulatus (strain G186AR / H82 / ATCC MYA-2454 / RMSCC 2432) (Darling's disease fungus).